A 733-amino-acid polypeptide reads, in one-letter code: Methylmalonyl-CoA mutase large subunit (733 aa).

The span at 1–10 (MRIPEFDDIE) shows a compositional bias: acidic residues. Residues 1–22 (MRIPEFDDIELGAGGGPSGSAE) are disordered. Tyr-78, Met-81, Thr-88, Arg-90, Tyr-92, and Ser-117 together coordinate (R)-methylmalonyl-CoA. Cob(II)alamin-binding residues include Phe-120 and Ala-142. (R)-methylmalonyl-CoA-binding residues include Thr-198 and Gln-200. Val-209 and Arg-210 together coordinate cob(II)alamin. (R)-methylmalonyl-CoA is bound by residues Arg-210, His-247, Arg-286, and Ser-288. Cob(II)alamin contacts are provided by Gly-336, Glu-373, Ala-376, Gly-612, His-613, Asp-614, Arg-615, Ser-658, Leu-660, Gly-689, and Thr-712. Residues 600-732 (RPRILVAKMG…KRLAADLGHE (133 aa)) enclose the B12-binding domain.

The protein belongs to the methylmalonyl-CoA mutase family. Heterodimer of an alpha and a beta chain. The cofactor is adenosylcob(III)alamin.

The enzyme catalyses (R)-methylmalonyl-CoA = succinyl-CoA. Functionally, catalyzes the isomerization of succinyl-CoA to methylmalonyl-CoA during synthesis of propionate from tricarboxylic acid-cycle intermediates. This conversion most likely represents an important source of building blocks for polyketide antibiotic biosynthesis. It is unable to catalyze the conversion of isobutyryl-CoA into N-butyryl-CoA. The sequence is that of Methylmalonyl-CoA mutase large subunit (mutB) from Streptomyces virginiae (Streptomyces cinnamonensis).